The chain runs to 453 residues: F-box protein At4g27050 (453 aa).

One can recognise an F-box domain in the interval 3-51 (TDLISNLPDDVLGKILSLVPTKLAAATSVLSKRWRNLLPLVDSLDFDET).

Part of a SCF (ASK-cullin-F-box) protein ligase complex.

Its pathway is protein modification; protein ubiquitination. Its function is as follows. Component of SCF(ASK-cullin-F-box) E3 ubiquitin ligase complexes, which may mediate the ubiquitination and subsequent proteasomal degradation of target proteins. The chain is F-box protein At4g27050 from Arabidopsis thaliana (Mouse-ear cress).